Here is a 195-residue protein sequence, read N- to C-terminus: Achaete-scute homolog 1b (195 aa).

The region spanning 66–118 is the bHLH domain; the sequence is MAVARRNERERNRVKQVNMGFQTLRQHVPNGAANKKMSKVETLRSAVEYIRAL. A disordered region spans residues 141–164; the sequence is VSNAYSAGPESPHSAYSSDEGSYE.

As to quaternary structure, efficient DNA binding requires dimerization with another bHLH protein. In terms of tissue distribution, in the 24 hours embryo, expressed in hindbrain close to the anterior and posterior boundaries of rhombomeres 2-6 and in ventral cells close to the floor plate of most rhombomeres. Also expressed in the telencephalon, diencephalon, tegmentum and spinal cord at sites distinct from those expressing ascl1a. Not expressed in the adenohypophysis.

It is found in the nucleus. Functionally, transcriptional regulator. May mediate transcription activation by binding to the E box-containing promoter. Involved in neurogenesis. Involved in maintaining rhombomere boundaries in the hindbrain, probably via up-regulation of delta expression. May mediate transcription activation by binding to the E box-containing promoter. In Danio rerio (Zebrafish), this protein is Achaete-scute homolog 1b.